Consider the following 154-residue polypeptide: General odorant-binding protein 83a (154 aa).

The first 33 residues, 1–33, serve as a signal peptide directing secretion; it reads MALNGFGRRVSASVLLIALSLLSGALILPPAAA. 3 cysteine pairs are disulfide-bonded: Cys55/Cys86, Cys82/Cys133, and Cys124/Cys142.

The protein belongs to the PBP/GOBP family. In the ventrolateral region of the antenna, expressed in two distinct types of olfactory hairs: in most sensilla trichodea and in a subset of the small sensilla basiconica (at protein level).

Its subcellular location is the secreted. This chain is General odorant-binding protein 83a (Obp83a), found in Drosophila melanogaster (Fruit fly).